Consider the following 115-residue polypeptide: Na(+)/H(+) antiporter subunit C1 (115 aa).

3 consecutive transmembrane segments (helical) span residues 1–21 (MEIL…YLIL), 28–48 (IIIG…TMGG), and 72–92 (LILT…VLAF).

The protein belongs to the CPA3 antiporters (TC 2.A.63) subunit C family. As to quaternary structure, may form a heterooligomeric complex that consists of seven subunits: mnhA1, mnhB1, mnhC1, mnhD1, mnhE1, mnhF1 and mnhG1.

It is found in the cell membrane. In terms of biological role, mnh complex is a Na(+)/H(+) antiporter involved in Na(+) excretion. In Staphylococcus saprophyticus subsp. saprophyticus (strain ATCC 15305 / DSM 20229 / NCIMB 8711 / NCTC 7292 / S-41), this protein is Na(+)/H(+) antiporter subunit C1 (mnhC1).